Here is a 500-residue protein sequence, read N- to C-terminus: Intracellular exo-alpha-(1-&gt;5)-L-arabinofuranosidase 1 (500 aa).

3 residues coordinate alpha-L-arabinofuranose: glutamate 27, asparagine 72, and asparagine 172. Catalysis depends on glutamate 173, which acts as the Proton donor/acceptor. Residues tyrosine 244, glutamate 292, and glutamine 349 each contribute to the alpha-L-arabinofuranose site. Catalysis depends on glutamate 292, which acts as the Nucleophile.

It belongs to the glycosyl hydrolase 51 family. As to quaternary structure, homohexamer; trimer of dimers.

Its subcellular location is the cytoplasm. The enzyme catalyses Hydrolysis of terminal non-reducing alpha-L-arabinofuranoside residues in alpha-L-arabinosides.. It carries out the reaction (20S)-ginsenoside Rc + H2O = L-arabinofuranose + (20S)-ginsenoside Rd. It functions in the pathway glycan metabolism; L-arabinan degradation. At a concentration of 5 mM, K(+), Cu(2+) and Ni(2+) exhibit inhibitory effects on the activity. Additionally, the chemical reagent SDS also displays a certain degree of inhibition. Enzymatic activity is largely unaffected by product feedback inhibition. Its function is as follows. Involved in the degradation of arabinan and is a key enzyme in the complete degradation of the plant cell wall. Catalyzes the cleavage of terminal alpha-(1-&gt;5)-arabinofuranosyl bonds in different hemicellulosic homopolysaccharides (branched and debranched arabinans). It acts preferentially on arabinotriose, arabinobiose and linear alpha-(1-&gt;5)-L-arabinan, and is much less effective on branched sugar beet arabinan. When expressed in E.coli, the recombinant enyzme can hydrolyze, with relatively low catalytic efficiency, the terminal alpha-L-arabinofuranoside at the C20 position of ginsenoside Rc to produce ginsenoside Rd, a rare ginsenoside that exhibits diverse and powerful pharmacological activities. This chain is Intracellular exo-alpha-(1-&gt;5)-L-arabinofuranosidase 1, found in Bacillus subtilis (strain 168).